The sequence spans 171 residues: uncharacterized protein (171 aa).

The segment at 139–171 is disordered; that stretch reads ARKPTKSDDEEEEVGKMGGISSSINSWVQRQKL. Residues 158–171 are compositionally biased toward polar residues; it reads ISSSINSWVQRQKL.

This is an uncharacterized protein from Caenorhabditis elegans.